A 208-amino-acid polypeptide reads, in one-letter code: Uracil phosphoribosyltransferase (208 aa).

Residues arginine 78, arginine 103, and 130-138 (DPMLATGGS) each bind 5-phospho-alpha-D-ribose 1-diphosphate. Residues isoleucine 193 and 198–200 (GDA) each bind uracil. Aspartate 199 provides a ligand contact to 5-phospho-alpha-D-ribose 1-diphosphate.

Belongs to the UPRTase family. Mg(2+) serves as cofactor.

It catalyses the reaction UMP + diphosphate = 5-phospho-alpha-D-ribose 1-diphosphate + uracil. It participates in pyrimidine metabolism; UMP biosynthesis via salvage pathway; UMP from uracil: step 1/1. With respect to regulation, allosterically activated by GTP. Functionally, catalyzes the conversion of uracil and 5-phospho-alpha-D-ribose 1-diphosphate (PRPP) to UMP and diphosphate. This is Uracil phosphoribosyltransferase from Colwellia psychrerythraea (strain 34H / ATCC BAA-681) (Vibrio psychroerythus).